The sequence spans 542 residues: Chaperonin GroEL 1 (542 aa).

ATP is bound by residues 29–32 (TLGP), 86–90 (DGTTT), Gly-413, 477–479 (NAA), and Asp-493.

This sequence belongs to the chaperonin (HSP60) family. Forms a cylinder of 14 subunits composed of two heptameric rings stacked back-to-back. Interacts with the co-chaperonin GroES.

The protein resides in the cytoplasm. The enzyme catalyses ATP + H2O + a folded polypeptide = ADP + phosphate + an unfolded polypeptide.. In terms of biological role, together with its co-chaperonin GroES, plays an essential role in assisting protein folding. The GroEL-GroES system forms a nano-cage that allows encapsulation of the non-native substrate proteins and provides a physical environment optimized to promote and accelerate protein folding. The protein is Chaperonin GroEL 1 of Renibacterium salmoninarum (strain ATCC 33209 / DSM 20767 / JCM 11484 / NBRC 15589 / NCIMB 2235).